Reading from the N-terminus, the 342-residue chain is UDP-N-acetylglucosamine--N-acetylmuramyl-(pentapeptide) pyrophosphoryl-undecaprenol N-acetylglucosamine transferase (342 aa).

UDP-N-acetyl-alpha-D-glucosamine is bound by residues 10 to 12, asparagine 124, serine 177, and glutamine 275; that span reads TGG.

It belongs to the glycosyltransferase 28 family. MurG subfamily.

The protein resides in the cell inner membrane. It carries out the reaction di-trans,octa-cis-undecaprenyl diphospho-N-acetyl-alpha-D-muramoyl-L-alanyl-D-glutamyl-meso-2,6-diaminopimeloyl-D-alanyl-D-alanine + UDP-N-acetyl-alpha-D-glucosamine = di-trans,octa-cis-undecaprenyl diphospho-[N-acetyl-alpha-D-glucosaminyl-(1-&gt;4)]-N-acetyl-alpha-D-muramoyl-L-alanyl-D-glutamyl-meso-2,6-diaminopimeloyl-D-alanyl-D-alanine + UDP + H(+). It functions in the pathway cell wall biogenesis; peptidoglycan biosynthesis. Its function is as follows. Cell wall formation. Catalyzes the transfer of a GlcNAc subunit on undecaprenyl-pyrophosphoryl-MurNAc-pentapeptide (lipid intermediate I) to form undecaprenyl-pyrophosphoryl-MurNAc-(pentapeptide)GlcNAc (lipid intermediate II). This chain is UDP-N-acetylglucosamine--N-acetylmuramyl-(pentapeptide) pyrophosphoryl-undecaprenol N-acetylglucosamine transferase, found in Campylobacter jejuni subsp. doylei (strain ATCC BAA-1458 / RM4099 / 269.97).